The chain runs to 223 residues: Cytidylate kinase (223 aa).

Residue 11–19 (GPAGVGKST) coordinates ATP.

It belongs to the cytidylate kinase family. Type 1 subfamily.

The protein resides in the cytoplasm. The enzyme catalyses CMP + ATP = CDP + ADP. It catalyses the reaction dCMP + ATP = dCDP + ADP. This Maridesulfovibrio salexigens (strain ATCC 14822 / DSM 2638 / NCIMB 8403 / VKM B-1763) (Desulfovibrio salexigens) protein is Cytidylate kinase.